Consider the following 370-residue polypeptide: Subtilisin-like protease (370 aa).

A signal peptide spans 1 to 17 (MIASIVFFIVLVDGVAT). Residues Asp13, His35, and Ser190 each act as charge relay system in the active site. One can recognise a Peptidase S8 domain in the interval 18 to 261 (GSPNALVTDF…FGEVSPSRLE (244 aa)). The P/Homo B domain occupies 240–370 (RVTDRWTHRN…TTEGTCHGIR (131 aa)).

It belongs to the peptidase S8 family.

The sequence is that of Subtilisin-like protease (ORF47) from Ictalurid herpesvirus 1 (strain Auburn) (IcHV-1).